The chain runs to 545 residues: Glutamyl-tRNA(Gln) amidotransferase subunit B-1, chloroplastic/mitochondrial (545 aa).

Belongs to the GatB/GatE family. GatB subfamily. Subunit of the heterotrimeric GatCAB amidotransferase (AdT) complex, composed of A, B and C subunits.

The protein resides in the mitochondrion. It is found in the plastid. Its subcellular location is the chloroplast. The enzyme catalyses L-glutamyl-tRNA(Gln) + L-glutamine + ATP + H2O = L-glutaminyl-tRNA(Gln) + L-glutamate + ADP + phosphate + H(+). In terms of biological role, allows the formation of correctly charged Gln-tRNA(Gln) through the transamidation of misacylated Glu-tRNA(Gln) in chloroplasts and mitochondria. The reaction takes place in the presence of glutamine and ATP through an activated gamma-phospho-Glu-tRNA(Gln). The sequence is that of Glutamyl-tRNA(Gln) amidotransferase subunit B-1, chloroplastic/mitochondrial from Micromonas pusilla (strain CCMP1545) (Picoplanktonic green alga).